The following is a 54-amino-acid chain: Potassium channel toxin alpha-KTx 14.3 (54 aa).

The N-terminal stretch at 1–23 (MKIFFAILLILAVCSMAIWTVNG) is a signal peptide.

This sequence belongs to the short scorpion toxin superfamily. Potassium channel inhibitor family. Alpha-KTx 14 subfamily. In terms of processing, contains 3 disulfide bridges. Expressed by the venom gland.

The protein resides in the secreted. Its function is as follows. Potential blocker of potassium channels. This chain is Potassium channel toxin alpha-KTx 14.3, found in Olivierus martensii (Manchurian scorpion).